A 426-amino-acid chain; its full sequence is MSTADEVTKKPRRRFVGVSRGENKVSTKQVSGDEAKELVRSAKSNTGARRAINQIPDEILNDENLQEAIKLLPSNYNFEIHKTVWNIRKHNAKRVALQMPEGLLIYSLVISDILEQFCNCETVVMGDVSYGACCIDDFTARALGCDFIVHYAHSCLVPVDVTSIKILYVFVTIGIDEDHLMKTLQKNFAKGTSLAVFGTIQFNPAIHSIREKLLYSESHMLYITPPQIKPLSKGEVLGCTSQRLPKEQFAAMVYVGDGRFHLESAMIHNPDIPAFRYDPYSRKFTRETYDQHQLVEVRSSAIEKARNSQCFGLILGALGRQGNLATVANLEKKLRAAGKKVVRIILSEIFPQKLAMFDHIDAFVQVACPRLSIDWGYAFNKPLLTPYETNVMLGQDRMFNEKYYPMDYYEVNGYGRGKQPTHDNVI.

[4Fe-4S] cluster-binding residues include Cys133, Cys239, and Cys368.

It belongs to the DPH1/DPH2 family. DPH1 subfamily. Component of the 2-(3-amino-3-carboxypropyl)histidine synthase complex composed of DPH1, DPH2, DPH3 and a NADH-dependent reductase, predominantly CBR1. [4Fe-4S] cluster is required as a cofactor.

It localises to the cytoplasm. It catalyses the reaction L-histidyl-[translation elongation factor 2] + S-adenosyl-L-methionine = 2-[(3S)-amino-3-carboxypropyl]-L-histidyl-[translation elongation factor 2] + S-methyl-5'-thioadenosine + H(+). It functions in the pathway protein modification; peptidyl-diphthamide biosynthesis. Catalyzes the first step of diphthamide biosynthesis, a post-translational modification of histidine which occurs in elongation factor 2. DPH1 and DPH2 transfer a 3-amino-3-carboxypropyl (ACP) group from S-adenosyl-L-methionine (SAM) to a histidine residue, the reaction is assisted by a reduction system comprising DPH3 and a NADH-dependent reductase, predominantly CBR1. This chain is 2-(3-amino-3-carboxypropyl)histidine synthase subunit 1 (DPH1), found in Eremothecium gossypii (strain ATCC 10895 / CBS 109.51 / FGSC 9923 / NRRL Y-1056) (Yeast).